A 65-amino-acid chain; its full sequence is Beta-defensin 106A (65 aa).

The signal sequence occupies residues 1–20 (MRTFLFLFAVLFFLTPAKNE). 3 cysteine pairs are disulfide-bonded: cysteine 26-cysteine 53, cysteine 33-cysteine 47, and cysteine 37-cysteine 54.

Belongs to the beta-defensin family. As to quaternary structure, monomer. Interacts with CCR2 (via extracellular N-terminal region); this interaction may preferentially require specific tyrosine sulfation on CCR2.

The protein resides in the secreted. The protein localises to the membrane. Has antibacterial activity. Acts as a ligand for C-C chemokine receptor CCR2. The polypeptide is Beta-defensin 106A (DEFB106A) (Pongo pygmaeus (Bornean orangutan)).